Consider the following 87-residue polypeptide: HssA/B-like protein 7 (87 aa).

A compositionally biased stretch (polar residues) spans 1-22 (MSILSALTSISNPMKSTKSSVA). The tract at residues 1–23 (MSILSALTSISNPMKSTKSSVAN) is disordered.

This sequence belongs to the hssA/B family.

This Dictyostelium discoideum (Social amoeba) protein is HssA/B-like protein 7 (hssl7).